We begin with the raw amino-acid sequence, 257 residues long: Hydroxyacylglutathione hydrolase (257 aa).

7 residues coordinate Zn(2+): His-54, His-56, Asp-58, His-59, His-113, Asp-137, and His-175.

Belongs to the metallo-beta-lactamase superfamily. Glyoxalase II family. As to quaternary structure, monomer. The cofactor is Zn(2+).

The catalysed reaction is an S-(2-hydroxyacyl)glutathione + H2O = a 2-hydroxy carboxylate + glutathione + H(+). The protein operates within secondary metabolite metabolism; methylglyoxal degradation; (R)-lactate from methylglyoxal: step 2/2. Thiolesterase that catalyzes the hydrolysis of S-D-lactoyl-glutathione to form glutathione and D-lactic acid. The protein is Hydroxyacylglutathione hydrolase of Trichormus variabilis (strain ATCC 29413 / PCC 7937) (Anabaena variabilis).